The chain runs to 521 residues: Vang-like protein 2-B (521 aa).

The span at 1-18 (MDNDSQYSGYSYKSGQSR) shows a compositional bias: low complexity. Positions 1–73 (MDNDSQYSGY…RDDNWGETTT (73 aa)) are disordered. Residues 1 to 108 (MDNDSQYSGY…AKLDCSRHLG (108 aa)) are Cytoplasmic-facing. Residues 19–33 (SSRKHRDRRERHRSK) are compositionally biased toward basic residues. Residues 57–67 (ESTRGEDRDDN) show a composition bias toward basic and acidic residues. A helical transmembrane segment spans residues 109–129 (VVIAGALALLSFLTPIAFMLL). Residues 130-147 (PQILWREDLEQCGTACEG) lie on the Extracellular side of the membrane. The chain crosses the membrane as a helical span at residues 148 to 168 (LFISVAFKLLILLLGSWALFF). Over 169 to 178 (RRPKAFFPRV) the chain is Cytoplasmic. A helical transmembrane segment spans residues 179–199 (FVFRALLMVLVFLLVVSYWLF). At 200–218 (YGVRILESRDKNYQGIVQY) the chain is on the extracellular side. Residues 219–239 (AVSLVDALLFVHYLAVVLLEL) form a helical membrane-spanning segment. The Cytoplasmic segment spans residues 240-521 (RQLQPQFTIK…VMRLQSETSV (282 aa)). Residues 518 to 521 (ETSV) carry the PDZ-binding motif.

This sequence belongs to the Vang family. As to quaternary structure, interacts with dvl/dsh. Interacts with prickle3. As to expression, during gastrulation, broadly expressed in the dorsal region in both mesodermal and neural tissues. From the neurula stages, expressed throughout the neural tube. In tailbud stages, expression declines in the anterior notochord but remains strong in the posterior notochord and in the neural tube. Also weakly expressed in the prenephritic region of late tailbud embryos.

Its subcellular location is the cell membrane. Has a role in non-canonical Wnt/planar cell polarity (PCP) signaling; can recruit dvl/dsh and prickle from the cytoplasm to the plasma membrane. Acts in a PCP complex to regulate the polarized assembly of fibronectrin on the surface of the mesoderm during gastrulation. Regulates convergent extension in both dorsal mesoderm and neural tissue without affecting cell fate. Regulates neural fold closure during neurulation. May be required for cell surface localization of fzd3 and fzd6 in the inner ear. This is Vang-like protein 2-B (vangl2-b) from Xenopus laevis (African clawed frog).